The sequence spans 315 residues: Probable cytosolic iron-sulfur protein assembly protein CIAO1 homolog (315 aa).

7 WD repeats span residues 11 to 50 (GHED…WVCK), 56 to 95 (GHQR…FESC), 100 to 139 (GHEN…EFEC), 145 to 188 (CHSQ…CTLD), 189 to 229 (KHAS…RSWE), 236 to 275 (RHPR…CSWR), and 283 to 315 (AHSQ…WQID).

This sequence belongs to the WD repeat CIA1 family.

In terms of biological role, essential component of the cytosolic iron-sulfur (Fe/S) protein assembly machinery. Required for the maturation of extramitochondrial Fe/S proteins. This Ixodes scapularis (Black-legged tick) protein is Probable cytosolic iron-sulfur protein assembly protein CIAO1 homolog.